The following is a 260-amino-acid chain: uncharacterized protein (260 aa).

It belongs to the methyltransferase superfamily.

The protein localises to the cytoplasm. It is found in the nucleus. In terms of biological role, probable methyltransferase. This is an uncharacterized protein from Schizosaccharomyces pombe (strain 972 / ATCC 24843) (Fission yeast).